A 164-amino-acid polypeptide reads, in one-letter code: Crossover junction endodeoxyribonuclease RuvC (164 aa).

Residues aspartate 7, glutamate 67, and aspartate 140 contribute to the active site. Mg(2+)-binding residues include aspartate 7, glutamate 67, and aspartate 140.

Belongs to the RuvC family. Homodimer which binds Holliday junction (HJ) DNA. The HJ becomes 2-fold symmetrical on binding to RuvC with unstacked arms; it has a different conformation from HJ DNA in complex with RuvA. In the full resolvosome a probable DNA-RuvA(4)-RuvB(12)-RuvC(2) complex forms which resolves the HJ. Mg(2+) serves as cofactor.

It localises to the cytoplasm. The enzyme catalyses Endonucleolytic cleavage at a junction such as a reciprocal single-stranded crossover between two homologous DNA duplexes (Holliday junction).. Its function is as follows. The RuvA-RuvB-RuvC complex processes Holliday junction (HJ) DNA during genetic recombination and DNA repair. Endonuclease that resolves HJ intermediates. Cleaves cruciform DNA by making single-stranded nicks across the HJ at symmetrical positions within the homologous arms, yielding a 5'-phosphate and a 3'-hydroxyl group; requires a central core of homology in the junction. The consensus cleavage sequence is 5'-(A/T)TT(C/G)-3'. Cleavage occurs on the 3'-side of the TT dinucleotide at the point of strand exchange. HJ branch migration catalyzed by RuvA-RuvB allows RuvC to scan DNA until it finds its consensus sequence, where it cleaves and resolves the cruciform DNA. This Chloroflexus aurantiacus (strain ATCC 29364 / DSM 637 / Y-400-fl) protein is Crossover junction endodeoxyribonuclease RuvC.